A 333-amino-acid polypeptide reads, in one-letter code: Glyceraldehyde-3-phosphate dehydrogenase (333 aa).

NAD(+)-binding positions include 12–13 (RI), aspartate 36, arginine 80, and serine 120. Residues 150 to 152 (SCT), threonine 181, arginine 196, 209 to 210 (TG), and arginine 232 each bind D-glyceraldehyde 3-phosphate. The active-site Nucleophile is cysteine 151. Asparagine 314 provides a ligand contact to NAD(+).

Belongs to the glyceraldehyde-3-phosphate dehydrogenase family. As to quaternary structure, homotetramer.

Its subcellular location is the cytoplasm. It carries out the reaction D-glyceraldehyde 3-phosphate + phosphate + NAD(+) = (2R)-3-phospho-glyceroyl phosphate + NADH + H(+). It functions in the pathway carbohydrate degradation; glycolysis; pyruvate from D-glyceraldehyde 3-phosphate: step 1/5. In terms of biological role, catalyzes the oxidative phosphorylation of glyceraldehyde 3-phosphate (G3P) to 1,3-bisphosphoglycerate (BPG) using the cofactor NAD. The first reaction step involves the formation of a hemiacetal intermediate between G3P and a cysteine residue, and this hemiacetal intermediate is then oxidized to a thioester, with concomitant reduction of NAD to NADH. The reduced NADH is then exchanged with the second NAD, and the thioester is attacked by a nucleophilic inorganic phosphate to produce BPG. In Cereibacter sphaeroides (Rhodobacter sphaeroides), this protein is Glyceraldehyde-3-phosphate dehydrogenase (gapB).